The sequence spans 239 residues: Claudin-14 (239 aa).

Residues 1-7 (MASTAVQ) lie on the Cytoplasmic side of the membrane. Residues 8–28 (LLGFLLSFLGMVGTLITTILP) traverse the membrane as a helical segment. Topologically, residues 29-81 (HWRRTAHVGTNILTAVSYLKGLWMECVWHSTGIYQCQIYRSLLALPRDLQAAR) are extracellular. The chain crosses the membrane as a helical span at residues 82-102 (ALMVISCLLSGMACACAVVGM). Topologically, residues 103–115 (KCTRCAKGTPAKT) are cytoplasmic. The helical transmembrane segment at 116–136 (TFAVLGGALFLLAGLLCMVAV) threads the bilayer. Topologically, residues 137–162 (SWTTNDVVQNFYNPLLPSGMKFEIGQ) are extracellular. The chain crosses the membrane as a helical span at residues 163–183 (ALYLGFISSSLSLIGGTLLCL). The Cytoplasmic portion of the chain corresponds to 184-239 (SCQDEAPYRPYPPQSRAGATTTATAPAYRPPAAYKDNRAPSVTSAAHSGYRLNDYV).

The protein belongs to the claudin family. In terms of tissue distribution, expressed in all sensory epithelia of the inner ear vestibular organs, as well as in liver and kidney.

The protein resides in the cell junction. The protein localises to the tight junction. Its subcellular location is the cell membrane. Its function is as follows. Plays a major role in tight junction-specific obliteration of the intercellular space, through calcium-independent cell-adhesion activity. This is Claudin-14 (Cldn14) from Mus musculus (Mouse).